A 443-amino-acid polypeptide reads, in one-letter code: MAAQADDELNKLRLNGQNGEAKEQVSASAVDTADNDDSEDDEKEEEGGAEVAATEAAKKKKKRKPKKKKKGGAKKQSSPPRVPVSELFPNNQYPEGEIVEYKDENNYRTTNEEKRYLDRMNNDFLQEYRQGAEVHRQVRQYAQKNIKPGQTLTEIAEGIEDAVRALTGHQGLEEGDNIKGGMGFPCGLSINHCAAHYTPNAGNKMVLQQGDVMKVDFGAHINGRIVDSAFTMTFDPVYDNLLTAVKEATNTGIREAGIDVRMSDIGAAIQEVMESYEVEINGTTYPVKAIRNLNGHNIDQHVIHGGKSVPIVKGGDQTKMEEGEVFAIETFGSTGKGYVREDMETSHYAKAQDAPNVSLRLSSAKNLLNVINKNFGTLPFCRRYLDRLGQDKYLLGLNNLVSAGIVQDYPPLCDIKGSYTAQYEHTIVLRPTVKEVISRGDDY.

A disordered region spans residues 1-90 (MAAQADDELN…RVPVSELFPN (90 aa)). Residues 33–48 (ADNDDSEDDEKEEEGG) are compositionally biased toward acidic residues. Over residues 58–73 (KKKKKRKPKKKKKGGA) the composition is skewed to basic residues. A substrate-binding site is contributed by His-196. Residues Asp-216, Asp-227, and His-296 each contribute to the a divalent metal cation site. His-304 lines the substrate pocket. A divalent metal cation contacts are provided by Glu-329 and Glu-424.

Belongs to the peptidase M24A family. Methionine aminopeptidase eukaryotic type 2 subfamily. Co(2+) serves as cofactor. Zn(2+) is required as a cofactor. Requires Mn(2+) as cofactor. It depends on Fe(2+) as a cofactor.

Its subcellular location is the cytoplasm. The catalysed reaction is Release of N-terminal amino acids, preferentially methionine, from peptides and arylamides.. Cotranslationally removes the N-terminal methionine from nascent proteins. The N-terminal methionine is often cleaved when the second residue in the primary sequence is small and uncharged (Met-Ala-, Cys, Gly, Pro, Ser, Thr, or Val). This is Methionine aminopeptidase 2-1 from Talaromyces stipitatus (strain ATCC 10500 / CBS 375.48 / QM 6759 / NRRL 1006) (Penicillium stipitatum).